We begin with the raw amino-acid sequence, 250 residues long: tRNA-specific adenosine deaminase subunit TAD2 (250 aa).

A CMP/dCMP-type deaminase domain is found at 1–119 (MQHIKHMRTA…ERFGGNGTVL (119 aa)). A Zn(2+)-binding site is contributed by His54. Glu56 serves as the catalytic Proton donor. 2 residues coordinate Zn(2+): Cys88 and Cys91.

It belongs to the cytidine and deoxycytidylate deaminase family. ADAT2 subfamily. Heterodimer with TAD3. Zn(2+) is required as a cofactor.

It localises to the cytoplasm. The protein localises to the nucleus. The enzyme catalyses adenosine(34) in tRNA + H2O + H(+) = inosine(34) in tRNA + NH4(+). Functionally, structural subunit of tRNA-specific adenosine deaminase, which deaminates adenosine-34 (the first, also called wobble position of the anticodon) to inosine in many tRNAs. Inosine-34 allows the decoding of 3 different nucleotides at the third position of mRNA codons, as inosine is able to pair with U, C, and A. In Saccharomyces cerevisiae (strain ATCC 204508 / S288c) (Baker's yeast), this protein is tRNA-specific adenosine deaminase subunit TAD2 (TAD2).